A 330-amino-acid polypeptide reads, in one-letter code: D-lactate dehydrogenase (330 aa).

NAD(+) is bound by residues 156–157 (RI), aspartate 176, 206–207 (VP), 233–235 (AAR), and aspartate 259. Arginine 235 is an active-site residue. Residue glutamate 264 is part of the active site. Histidine 296 functions as the Proton donor in the catalytic mechanism.

It belongs to the D-isomer specific 2-hydroxyacid dehydrogenase family.

The enzyme catalyses (R)-lactate + NAD(+) = pyruvate + NADH + H(+). The chain is D-lactate dehydrogenase (ldhD) from Staphylococcus aureus.